The chain runs to 176 residues: Ribosome maturation factor RimM (176 aa).

The PRC barrel domain maps to 97 to 176; that stretch reads EDEFYWRDLI…QILVDWDPDF (80 aa).

Belongs to the RimM family. Binds ribosomal protein uS19.

The protein resides in the cytoplasm. Functionally, an accessory protein needed during the final step in the assembly of 30S ribosomal subunit, possibly for assembly of the head region. Essential for efficient processing of 16S rRNA. May be needed both before and after RbfA during the maturation of 16S rRNA. It has affinity for free ribosomal 30S subunits but not for 70S ribosomes. This is Ribosome maturation factor RimM from Shewanella sp. (strain MR-4).